We begin with the raw amino-acid sequence, 238 residues long: Inactive glycoside hydrolase XLP1 (238 aa).

Positions M1–A19 are cleaved as a signal peptide. The active site involves E133. N-linked (GlcNAc...) asparagine glycosylation is found at N171 and N187. The active site involves E219.

This sequence belongs to the glycosyl hydrolase 12 (cellulase H) family. As to quaternary structure, interacts with host apoplastic glucanase inhibitor GIP2.

Its subcellular location is the secreted. Functionally, non-functional secreted XEG1-like protein that binds to host Nicotiana benthamiana apoplastic glucanase inhibitor protein GIP2 more tightly than does XEG1, thus it outcompetes XEG1 for GIP2 binding and frees functional XEG1 to support P.parasitica infection. With XEG1, is required to elevate apoplastic sugar during P.parasitica infection. The polypeptide is Inactive glycoside hydrolase XLP1 (Phytophthora nicotianae (strain INRA-310) (Phytophthora parasitica)).